We begin with the raw amino-acid sequence, 206 residues long: Endoplasmic reticulum transmembrane protein YET-like (206 aa).

Residues 1–2 lie on the Lumenal side of the membrane; it reads ME. A helical transmembrane segment spans residues 3–23; that stretch reads FLMTLVFLVLLVEIVFCTFFM. The Cytoplasmic segment spans residues 24–46; the sequence is LPVSMHLRKNVYNKLDKLFGGQN. The helical transmembrane segment at 47–67 threads the bilayer; the sequence is AKIFLKVLALLVIIVFCDSIV. The Lumenal portion of the chain corresponds to 68–101; it reads NSYNINKKLHTPELTGAKFDRQNEYTRMFRYQRN. Residues 102–122 traverse the membrane as a helical segment; it reads SYICGFCLYLFFLIYRSQGII. Residues 123–206 are Cytoplasmic-facing; that stretch reads SQLSNVEASK…KKPKTQKKDD (84 aa). A coiled-coil region spans residues 140-198; it reads KNNLNTVETLLSENEKLKTEIKDLKKMEKEHKAMKSQAENTTKEYLKLQEEYNQLLGKK. The short motif at 203 to 206 is the Di-lysine motif element; sequence KKDD.

This sequence belongs to the BCAP29/BCAP31 family.

It localises to the endoplasmic reticulum membrane. Its function is as follows. May play a role in anterograde transport of membrane proteins from the endoplasmic reticulum to the Golgi. This is Endoplasmic reticulum transmembrane protein YET-like from Dictyostelium discoideum (Social amoeba).